Reading from the N-terminus, the 129-residue chain is Glycine cleavage system H protein (129 aa).

Residues 24 to 106 enclose the Lipoyl-binding domain; the sequence is TFTVGITEHA…FGDGWLFRIK (83 aa). The residue at position 65 (Lys65) is an N6-lipoyllysine.

The protein belongs to the GcvH family. As to quaternary structure, the glycine cleavage system is composed of four proteins: P, T, L and H. (R)-lipoate is required as a cofactor.

The glycine cleavage system catalyzes the degradation of glycine. The H protein shuttles the methylamine group of glycine from the P protein to the T protein. This chain is Glycine cleavage system H protein, found in Pseudoalteromonas translucida (strain TAC 125).